The primary structure comprises 61 residues: MAKLKITQVRSKIGGNRKQHAALASLGLGRIGKSVIRDDRPEVRGQINVVAHLVTVEEVSS.

This sequence belongs to the universal ribosomal protein uL30 family. In terms of assembly, part of the 50S ribosomal subunit.

The polypeptide is Large ribosomal subunit protein uL30 (Thermobifida fusca (strain YX)).